The sequence spans 500 residues: Lysine--tRNA ligase (500 aa).

Mg(2+) is bound by residues Asp412 and Glu419.

Belongs to the class-II aminoacyl-tRNA synthetase family. In terms of assembly, homodimer. Mg(2+) is required as a cofactor.

Its subcellular location is the cytoplasm. The enzyme catalyses tRNA(Lys) + L-lysine + ATP = L-lysyl-tRNA(Lys) + AMP + diphosphate. In Kineococcus radiotolerans (strain ATCC BAA-149 / DSM 14245 / SRS30216), this protein is Lysine--tRNA ligase.